Reading from the N-terminus, the 668-residue chain is MVCGLTSCLGSGAAGGLFSSAVQFFAATQCLVGETWPKDSVLQNGSRYDFIIVGAGTAGSALAARLSEVANFSVLLLEAGGDPPIEAIIPAFRETLKASSVDWNFTSVENNITSQALKRGIEQQPRGKMLGGSGSLNHMVYARGFPSDYHEWASIAGETWNWTNVLKYFMKTEHMTDTNIVNNPELMVYHGRGGAIEVSGTNEVMFSIKKFLQAFEELGFKTVPDMTYPNSIGAGCFSHTIRNGERDSSLRALLNNANSTSLHILKDTFVTKIIIENGTAIGIEAVKDDKTFLFYADREVILSAGTFNTPKLLMLSGVGRSEHLRSLGIDVVADLPVGSNLHDHAMVLAFLVADNGTCVSDEAENSMEAIKYLYDRTGFLAKADNMAAYLPLSSSEPTVPEFALYPTCIPQFSPFRSGCLTLGLNEDLCTELHNLNQEYELVTIAAVLLKPKSRGKVELNSINPFDDPLIYAGTFSEEQDLDHFPRLIKMAWSIADTNYFRSKNARVIKPWVEACSNLTESAWIKCMSRAMVTSAWHSVGTAAMGTVVDGDLKVLGINGLRVVDASVMPKIIRGNTNAPVVMIAEIAADLIKEHYSVSRTGTNLNNMTIGNLTASSMPNISQPNINLADVIENNDMINSSLIEVEITNVEIITTTDRQSDIDDTVNVA.

FAD-binding positions include 137–140 (NHMV), valine 270, and 536–537 (WH). Histidine 537 (proton acceptor) is an active-site residue.

This sequence belongs to the GMC oxidoreductase family. FAD serves as cofactor.

The enzyme catalyses ecdysone + O2 = 3-dehydroecdysone + H2O2. Its function is as follows. Involved in the inactivation of ecdysteroid molting hormones by converting ecdysteroids into 3-dehydroecdysteroids. This Bombyx mori (Silk moth) protein is Ecdysone oxidase.